The chain runs to 3097 residues: Neural-cadherin (3097 aa).

The first 36 residues, 1–36, serve as a signal peptide directing secretion; that stretch reads MAARRCLNQLRQRYITNRFNICTCAIFLISLPFILA. Residues asparagine 97 and asparagine 150 are each glycosylated (N-linked (GlcNAc...) asparagine). The Cadherin 1 domain maps to 181 to 305; it reads VRENQPAGTR…LDENDNRPIF (125 aa). Asparagine 325 and asparagine 426 each carry an N-linked (GlcNAc...) asparagine glycan. Cadherin domains are found at residues 430–543, 554–651, 660–756, 766–858, 867–968, 978–1078, 1087–1183, 1193–1299, 1307–1414, 1423–1514, 1523–1630, 1639–1742, 1749–1861, 1870–1966, and 1974–2085; these read HREK…PPYF, VQLN…APQF, IPEN…APKF, VDED…EPKF, VDEN…KPVF, VEEG…PPLF, VKQD…PPVW, VKEN…IPLF, VLEG…PPYF, VDEN…PPVF, ITEE…APIF, VTEN…PPQF, TEVD…KPHF, VFED…APKF, and LPEH…QPGS. Asparagine 930 carries N-linked (GlcNAc...) asparagine glycosylation. Asparagine 1266 carries an N-linked (GlcNAc...) asparagine glycan. Cystine bridges form between cysteine 2346/cysteine 2357, cysteine 2351/cysteine 2366, cysteine 2368/cysteine 2377, cysteine 2559/cysteine 2585, cysteine 2592/cysteine 2607, cysteine 2601/cysteine 2616, cysteine 2618/cysteine 2627, cysteine 2787/cysteine 2822, cysteine 2869/cysteine 2880, cysteine 2874/cysteine 2891, and cysteine 2893/cysteine 2902. An EGF-like 1 domain is found at 2346-2377; sequence CRTTPCHNGGRCVDTRFGPHCSCPVGYTGPRC. A Laminin G-like 1 domain is found at 2379–2585; that stretch reads QTTRSFRGNG…GLSRNSVAGC (207 aa). The 36-residue stretch at 2592–2627 folds into the EGF-like 2 domain; sequence CAQTETTARCWEHGNCVGSLSEARCHCRPGWTGPAC. The region spanning 2631–2822 is the Laminin G-like 2 domain; sequence TIPTTFKAQS…TMARNLEKGC (192 aa). The EGF-like 3 domain occupies 2869-2902; the sequence is CLDMPCMNGATCINLEPRLRYRCICPDGFWGENC. A helical transmembrane segment spans residues 2917–2937; it reads ALAAILVCLLIILILVLVFVV. Residues 2938 to 3097 lie on the Cytoplasmic side of the membrane; it reads YNRRREAHIK…PNPHNTELEL (160 aa).

As to expression, in the embryo, the protein first appears in the mesoderm at stage 9 and is present in the myoblasts and muscle fibers by stage 12 and stage 14, respectively. At stage 12 the protein is also located in the axons of the entire CNS, but not in the glial cells. In third instar larvae protein is expressed in the CNS neuropile, photoreceptor axons and precursors of adult muscles.

The protein resides in the cell membrane. Cadherins are calcium-dependent cell adhesion proteins. They preferentially interact with themselves in a homophilic manner in connecting cells; cadherins may thus contribute to the sorting of heterogeneous cell types. May associate with arm neural isoform and participate in the transmission of developmental information. This chain is Neural-cadherin (CadN), found in Drosophila melanogaster (Fruit fly).